Reading from the N-terminus, the 311-residue chain is Pyrimidine-specific ribonucleoside hydrolase RihA (311 aa).

The active site involves His-240.

This sequence belongs to the IUNH family. RihA subfamily.

Functionally, hydrolyzes cytidine or uridine to ribose and cytosine or uracil, respectively. This Salmonella newport (strain SL254) protein is Pyrimidine-specific ribonucleoside hydrolase RihA.